A 743-amino-acid polypeptide reads, in one-letter code: Elongation factor 2 (743 aa).

The region spanning 19–265 (NNIRNIGIIA…MVVRHLPSPK (247 aa)) is the tr-type G domain. GTP is bound by residues 28-35 (AHIHHGKT), 94-98 (DTPGH), and 148-151 (NKVD). Residue histidine 615 is modified to Diphthamide.

The protein belongs to the TRAFAC class translation factor GTPase superfamily. Classic translation factor GTPase family. EF-G/EF-2 subfamily.

It localises to the cytoplasm. Catalyzes the GTP-dependent ribosomal translocation step during translation elongation. During this step, the ribosome changes from the pre-translocational (PRE) to the post-translocational (POST) state as the newly formed A-site-bound peptidyl-tRNA and P-site-bound deacylated tRNA move to the P and E sites, respectively. Catalyzes the coordinated movement of the two tRNA molecules, the mRNA and conformational changes in the ribosome. The polypeptide is Elongation factor 2 (Nanoarchaeum equitans (strain Kin4-M)).